The chain runs to 657 residues: MSDAHNAQLDWDEHGQPLSRSYGDVYFSRANGLEETRHVFLAHNQIIERCQALPAGGRLVIGETGFGTGLNFLCAWQAFAEHAPRDARLHFVSVEKFPLTQTDLQRALALWPELAPYAEQLLAQYRAIHPGFQRLLLDGGRVVLTLMIGDVLECLPQLDARIDAWFLDGFAPAKNPEMWTDSLFTELARLSAPGATLATFTSAGFVRRGLIAAGFAVQRVKGFGHKREMLAGPFQAEPAPRSAPWFARPTLAAGARQAVVIGAGLAGCATAASLAARGWRVTLLERHDDVAREASGNPQGVLYLKLSAHGTVLSRLIVAGFGHTRRLLERLQRGSDWDACGVLQLAFDAKEAERQNKLAAAFPDDLLHALPQTEAEARAGIGLPAGGLFYPDAGWVHPPALCRQLAQHPLIELRPYQEALSLSRQQERWCVEGQNGVLAEAPVLILACAAEIGRLLPEANLPLKRIRGQISRLPANESSSALRTVVCAEGYVAPARDDEHTLGASFDFHSDDLTPSVAEHAGNLELLREISQDLAERLDTQTLDPATLQGRAAFRCTSPDYLPLVGPLAAGQAFNQAYAVLAKDARQVPETPCPWLDGLYINSGHGSRGLITAPLSGELIAAWLEDEPLPLPREVAEACHPNRFMLRQLIRGTGSPT.

Residues 1 to 235 (MSDAHNAQLD…KREMLAGPFQ (235 aa)) are tRNA (mnm(5)s(2)U34)-methyltransferase. Residues 261–657 (IGAGLAGCAT…QLIRGTGSPT (397 aa)) form an FAD-dependent cmnm(5)s(2)U34 oxidoreductase region.

It in the N-terminal section; belongs to the methyltransferase superfamily. tRNA (mnm(5)s(2)U34)-methyltransferase family. The protein in the C-terminal section; belongs to the DAO family. Requires FAD as cofactor.

It is found in the cytoplasm. It carries out the reaction 5-aminomethyl-2-thiouridine(34) in tRNA + S-adenosyl-L-methionine = 5-methylaminomethyl-2-thiouridine(34) in tRNA + S-adenosyl-L-homocysteine + H(+). In terms of biological role, catalyzes the last two steps in the biosynthesis of 5-methylaminomethyl-2-thiouridine (mnm(5)s(2)U) at the wobble position (U34) in tRNA. Catalyzes the FAD-dependent demodification of cmnm(5)s(2)U34 to nm(5)s(2)U34, followed by the transfer of a methyl group from S-adenosyl-L-methionine to nm(5)s(2)U34, to form mnm(5)s(2)U34. The chain is tRNA 5-methylaminomethyl-2-thiouridine biosynthesis bifunctional protein MnmC from Ectopseudomonas mendocina (strain ymp) (Pseudomonas mendocina).